The chain runs to 481 residues: MNQTCKVCGEPAAGFHFGAFTCEGCKSFFGRSYNNISTISECKNDGKCIIDKKNRTTCKACRLRKCYNVGMSKGGSRYGRRSNWFKIHCLLQEHEQAAAAAAGKAPGHATGSPMSSPGFGDLAAHLQQQQQQHQQQQQQQHQHQQQQQRHPHLPPLLGYTGYHLPEHFGARHPADAAAAAAALPFFSMMATPQSAFQLPPHLLFPGYHASAAAAAAADAAYRQEMYKHRQSVDSAASAESHSRYTPPTVATVPQQSQPQPAASPIDVCLGADDDVQSQHSHSHSHSQSQSPHTIHTPVAIRATPPQQLLPGLTTASHSSSASPTPSKSQSSSPLSFTAKMQSLSPVSVCSIGGETAAANAAASAAAAAQDGPMDLSMKTSRSSVHSFNDSDVCSLQDEHELAARRKYYQLEAECTTITNTTNSCSSSTSTSSSNSSTSSTEAAVAVKRQKLNPIGGESPPFGGFAVTHNASSAMRSIFVCV.

The segment at residues 2–78 (NQTCKVCGEP…VGMSKGGSRY (77 aa)) is a DNA-binding region (nuclear receptor). 2 NR C4-type zinc fingers span residues 5 to 25 (CKVC…CEGC) and 42 to 66 (CKND…LRKC). 5 stretches are compositionally biased toward low complexity: residues 100–111 (AAAGKAPGHATG), 127–148 (QQQQ…QQQQ), 245–264 (TPPT…AASP), 316–335 (SHSS…SPLS), and 420–440 (TTNS…TSST). Disordered regions lie at residues 100–161 (AAAG…GYTG), 231–294 (SVDS…PHTI), 308–336 (LLPG…PLSF), and 420–442 (TTNS…STEA).

It belongs to the nuclear hormone receptor family. NR0 subfamily.

Its subcellular location is the nucleus. Functionally, transcriptional repressor. Binds to multiple sites in the eve stripe 3 enhancer element. Plays an essential role in the segmentation process both by refining the expression patterns of gap genes and by establishing pair-rules stripes of gene expression. In Drosophila virilis (Fruit fly), this protein is Zygotic gap protein knirps (kni).